The following is a 149-amino-acid chain: Transcriptional regulator MraZ (149 aa).

SpoVT-AbrB domains follow at residues 7-54 (KYIN…GIAH) and 83-126 (AVQL…QPQN).

This sequence belongs to the MraZ family. In terms of assembly, forms oligomers.

It is found in the cytoplasm. It localises to the nucleoid. This Rickettsia typhi (strain ATCC VR-144 / Wilmington) protein is Transcriptional regulator MraZ.